The chain runs to 974 residues: GATOR2 complex protein WDR59 (974 aa).

WD repeat units follow at residues 57 to 98 (QSKW…GEVG), 103 to 143 (GHTR…KPTV), 146 to 185 (SAVA…TAVE), 189 to 229 (AHLS…KYLN), 232 to 276 (PCQV…TPVH), 278 to 318 (FVGH…RVDS), and 319 to 362 (QMQR…TASH). The segment at 350-374 (HTEDTDHQHTASHGEEEALKEDPPR) is disordered. Residues 393–494 (QEFSLINVQI…RQLVSCLESF (102 aa)) form the RWD domain. Serine 564 is modified (phosphoserine). One copy of the WD 8 repeat lies at 668 to 706 (LNVNDIQETCQKNAASALLVGRKDLVQVWSLATVATDLC). A phosphoserine mark is found at serine 821, serine 822, and serine 830. Positions 831-852 (LTYSDPRERERDQHDKNKRLLD) are disordered. The span at 835-851 (DPRERERDQHDKNKRLL) shows a compositional bias: basic and acidic residues. Residues 901-920 (YCSHCRSEVRGTQCAICKGF) form a C4-type zinc finger. Zn(2+)-binding residues include cysteine 902, cysteine 905, cysteine 914, cysteine 917, cysteine 927, cysteine 938, histidine 943, histidine 946, histidine 949, cysteine 960, cysteine 964, cysteine 966, and cysteine 968. The RING-type; atypical zinc-finger motif lies at 921 to 973 (TFQCAICHVAVRGSSNFCLTCGHGGHTSHMMEWFRTQEVCPTGCGCHCLLEST).

The protein belongs to the WD repeat WDR59 family. As to quaternary structure, component of the GATOR2 subcomplex, composed of MIOS, SEC13, SEH1L, WDR24 and WDR59. The GATOR2 complex interacts with CASTOR1 and CASTOR2; the interaction is negatively regulated by arginine. The GATOR2 complex interacts with SESN1, SESN2 and SESN3; the interaction is negatively regulated by amino acids. Interacts with DDB1-CUL4A/B E3 ligase complexes.

The protein localises to the lysosome membrane. The GATOR2 complex is negatively regulated by the upstream amino acid sensors CASTOR1 and SESN2, which sequester the GATOR2 complex in absence of amino acids. In the presence of abundant amino acids, GATOR2 is released from CASTOR1 and SESN2 and activated. Its function is as follows. As a component of the GATOR2 complex, functions as an activator of the amino acid-sensing branch of the mTORC1 signaling pathway. The GATOR2 complex indirectly activates mTORC1 through the inhibition of the GATOR1 subcomplex. GATOR2 probably acts as an E3 ubiquitin-protein ligase toward GATOR1. In the presence of abundant amino acids, the GATOR2 complex mediates ubiquitination of the NPRL2 core component of the GATOR1 complex, leading to GATOR1 inactivation. In the absence of amino acids, GATOR2 is inhibited, activating the GATOR1 complex. This Homo sapiens (Human) protein is GATOR2 complex protein WDR59.